We begin with the raw amino-acid sequence, 154 residues long: 6,7-dimethyl-8-ribityllumazine synthase (154 aa).

Residues phenylalanine 22, 56 to 58, and 80 to 82 each bind 5-amino-6-(D-ribitylamino)uracil; these read SFE and AVI. A (2S)-2-hydroxy-3-oxobutyl phosphate-binding site is contributed by 85–86; sequence ST. The active-site Proton donor is histidine 88. Residue tyrosine 113 participates in 5-amino-6-(D-ribitylamino)uracil binding. Arginine 127 contacts (2S)-2-hydroxy-3-oxobutyl phosphate.

This sequence belongs to the DMRL synthase family. As to quaternary structure, forms an icosahedral capsid composed of 60 subunits, arranged as a dodecamer of pentamers.

The catalysed reaction is (2S)-2-hydroxy-3-oxobutyl phosphate + 5-amino-6-(D-ribitylamino)uracil = 6,7-dimethyl-8-(1-D-ribityl)lumazine + phosphate + 2 H2O + H(+). It functions in the pathway cofactor biosynthesis; riboflavin biosynthesis; riboflavin from 2-hydroxy-3-oxobutyl phosphate and 5-amino-6-(D-ribitylamino)uracil: step 1/2. Catalyzes the formation of 6,7-dimethyl-8-ribityllumazine by condensation of 5-amino-6-(D-ribitylamino)uracil with 3,4-dihydroxy-2-butanone 4-phosphate. This is the penultimate step in the biosynthesis of riboflavin. The protein is 6,7-dimethyl-8-ribityllumazine synthase of Sulfurihydrogenibium sp. (strain YO3AOP1).